Here is a 291-residue protein sequence, read N- to C-terminus: MASLKEMRNRISSVKATQKITKAMQMVAAAKLRRSQDAAESARPYARRLASVIANLAAGVSGDGAPKLLAGTGRDDRHLVVVAAADRGLAGGFTSSIVRAARAHIDGLIAQGKDVRVVCVGKKVTAQLAKPYAGRIVETFDLSSYRQLTLSVAQPIADVITREYEAGETDVVTLFYSRFKSVVQQIPTGLQLIPAVVETGEAASGPTAVYEYEPSEEAILETLLPRNLTVQILSALLDNMAGFYASQMTAMDNATRNAGDMIKRYTLEYNRSRQAQITKELIEIISGAEAV.

It belongs to the ATPase gamma chain family. F-type ATPases have 2 components, CF(1) - the catalytic core - and CF(0) - the membrane proton channel. CF(1) has five subunits: alpha(3), beta(3), gamma(1), delta(1), epsilon(1). CF(0) has three main subunits: a, b and c.

Its subcellular location is the cell inner membrane. In terms of biological role, produces ATP from ADP in the presence of a proton gradient across the membrane. The gamma chain is believed to be important in regulating ATPase activity and the flow of protons through the CF(0) complex. The chain is ATP synthase gamma chain from Caulobacter vibrioides (strain NA1000 / CB15N) (Caulobacter crescentus).